The primary structure comprises 286 residues: Shikimate dehydrogenase (NADP(+)) (286 aa).

Shikimate is bound by residues serine 20–serine 22 and threonine 67. Lysine 71 (proton acceptor) is an active-site residue. Residues asparagine 92 and aspartate 107 each coordinate shikimate. Residues glycine 132–alanine 136 and methionine 228 contribute to the NADP(+) site. Residue tyrosine 230 participates in shikimate binding. Glycine 251 serves as a coordination point for NADP(+).

It belongs to the shikimate dehydrogenase family. In terms of assembly, homodimer.

It carries out the reaction shikimate + NADP(+) = 3-dehydroshikimate + NADPH + H(+). Its pathway is metabolic intermediate biosynthesis; chorismate biosynthesis; chorismate from D-erythrose 4-phosphate and phosphoenolpyruvate: step 4/7. Involved in the biosynthesis of the chorismate, which leads to the biosynthesis of aromatic amino acids. Catalyzes the reversible NADPH linked reduction of 3-dehydroshikimate (DHSA) to yield shikimate (SA). The sequence is that of Shikimate dehydrogenase (NADP(+)) from Geobacter sulfurreducens (strain ATCC 51573 / DSM 12127 / PCA).